The chain runs to 80 residues: Defensin-like protein 207 (80 aa).

An N-terminal signal peptide occupies residues 1–29 (MAKNLNSVSFIVLLLVLLVASTEILKSDA). 3 cysteine pairs are disulfide-bonded: C38-C64, C50-C75, and C54-C77.

Belongs to the DEFL family.

It localises to the secreted. The polypeptide is Defensin-like protein 207 (Arabidopsis thaliana (Mouse-ear cress)).